The following is a 243-amino-acid chain: Small ribosomal subunit protein eS4 (243 aa).

In terms of domain architecture, S4 RNA-binding spans Ile-43–Asn-105.

This sequence belongs to the eukaryotic ribosomal protein eS4 family.

The chain is Small ribosomal subunit protein eS4 (rps4e) from Pyrococcus abyssi (strain GE5 / Orsay).